Reading from the N-terminus, the 526-residue chain is Peptide chain release factor 3 (526 aa).

Residues 8 to 277 (NKRRTFAIIS…GLTEWAPKPQ (270 aa)) enclose the tr-type G domain. GTP-binding positions include 17–24 (SHPDAGKT), 85–89 (DTPGH), and 139–142 (NKLD).

This sequence belongs to the TRAFAC class translation factor GTPase superfamily. Classic translation factor GTPase family. PrfC subfamily.

It localises to the cytoplasm. Functionally, increases the formation of ribosomal termination complexes and stimulates activities of RF-1 and RF-2. It binds guanine nucleotides and has strong preference for UGA stop codons. It may interact directly with the ribosome. The stimulation of RF-1 and RF-2 is significantly reduced by GTP and GDP, but not by GMP. This chain is Peptide chain release factor 3, found in Actinobacillus pleuropneumoniae serotype 5b (strain L20).